The primary structure comprises 412 residues: Nucleoside transporter 1 (412 aa).

Positions 1–21 are disordered; it reads MSKIKESSSGILGASNNTNKE. The Cytoplasmic segment spans residues 1-29; the sequence is MSKIKESSSGILGASNNTNKESSQKSARS. Polar residues predominate over residues 7–21; it reads SSSGILGASNNTNKE. A helical membrane pass occupies residues 30–50; sequence IALPMTYALIGVSCLNVWNSA. The Extracellular portion of the chain corresponds to 51 to 56; that stretch reads LGLNIK. A helical transmembrane segment spans residues 57-77; the sequence is ITYNIFQMAGLLTSSVLALFV. Residues 78–81 are Cytoplasmic-facing; it reads NYPR. The helical transmembrane segment at 82-102 threads the bilayer; it reads VLLPTSLGVLTLLCAGFQIAH. The Extracellular portion of the chain corresponds to 103–114; the sequence is QTFSDSAFDTYC. Residues 115-135 traverse the membrane as a helical segment; it reads LAAFITIGLMAGIAQTIAFAI. Topologically, residues 136–144 are cytoplasmic; that stretch reads GTTKESNMS. Residues 145–165 form a helical membrane-spanning segment; sequence GYISAGIGMSGVLIFCINLIL. The Extracellular segment spans residues 166 to 181; the sequence is DYIVSDEKIYEINKSK. A helical transmembrane segment spans residues 182–202; it reads LLCLFSISEIFLIITIVCCVL. The Cytoplasmic segment spans residues 203–240; sequence YIDLFPKNDNNKDSTDIEKAEEKEGRLPLIEIIKDGYK. A helical membrane pass occupies residues 241–261; sequence AILSIFLVNWLSLQLFPGIGH. The Extracellular segment spans residues 262–271; it reads KKWQEKHGMT. Residues 272 to 294 form a helical membrane-spanning segment; that stretch reads DNNVTIIVGMFQVFDFISRYPPN. Over 295–310 the chain is Cytoplasmic; that stretch reads FTHIKIFKYFTFSLNT. Residues 311-331 traverse the membrane as a helical segment; the sequence is LLIGNFLRLLFIPWFVLNAVI. Over 332–343 the chain is Extracellular; the sequence is SSSFFTNIVQQC. Residues 344 to 364 traverse the membrane as a helical segment; the sequence is VCIAALAFTNGWFNTVPFIVF. The Cytoplasmic portion of the chain corresponds to 365–382; that stretch reads VKELKKVKHQKDIETISR. A helical membrane pass occupies residues 383 to 403; the sequence is IMVVSLFFGLFFGMLTTCLYD. Residues 404 to 412 are Extracellular-facing; that stretch reads YFPIGILNN.

It belongs to the SLC29A/ENT transporter (TC 2.A.57) family.

It localises to the cell membrane. It catalyses the reaction inosine(in) = inosine(out). The catalysed reaction is adenosine(in) = adenosine(out). The enzyme catalyses hypoxanthine(out) = hypoxanthine(in). It carries out the reaction guanosine(in) = guanosine(out). It catalyses the reaction guanine(out) = guanine(in). The catalysed reaction is thymidine(in) = thymidine(out). The enzyme catalyses uridine(out) = uridine(in). It carries out the reaction uracil(in) = uracil(out). It catalyses the reaction thymine(out) = thymine(in). The catalysed reaction is adenine(out) = adenine(in). The enzyme catalyses cytosine(out) = cytosine(in). It carries out the reaction xanthine(out) = xanthine(in). In terms of biological role, nucleoside and nucleobase transporter with a broad substrate specificity. In Plasmodium berghei (strain Anka), this protein is Nucleoside transporter 1.